Here is a 306-residue protein sequence, read N- to C-terminus: tRNA pseudouridine synthase B (306 aa).

The active-site Nucleophile is Asp47.

It belongs to the pseudouridine synthase TruB family. Type 1 subfamily.

The enzyme catalyses uridine(55) in tRNA = pseudouridine(55) in tRNA. Its function is as follows. Responsible for synthesis of pseudouridine from uracil-55 in the psi GC loop of transfer RNAs. The chain is tRNA pseudouridine synthase B from Neisseria gonorrhoeae (strain ATCC 700825 / FA 1090).